We begin with the raw amino-acid sequence, 177 residues long: Translation initiation factor IF-3 (177 aa).

The protein belongs to the IF-3 family. In terms of assembly, monomer.

It localises to the cytoplasm. In terms of biological role, IF-3 binds to the 30S ribosomal subunit and shifts the equilibrium between 70S ribosomes and their 50S and 30S subunits in favor of the free subunits, thus enhancing the availability of 30S subunits on which protein synthesis initiation begins. This Elusimicrobium minutum (strain Pei191) protein is Translation initiation factor IF-3.